The following is a 325-amino-acid chain: Probable ABC transporter permease YtrD (325 aa).

8 helical membrane-spanning segments follow: residues 16–36 (VALV…ILNM), 63–83 (SSFI…QLGI), 113–133 (MVIV…IMLL), 146–166 (LGMI…GALT), 179–199 (VAIS…ILFG), 233–253 (YLVI…ISFV), 272–292 (PVQI…GFTA), and 298–318 (GYLI…YFAI).

It belongs to the ABC-5 integral membrane protein family. The complex is composed of 2 ATP-binding proteins (YtrB and YtrE), 2 transmembrane proteins (YtrC and YtrD) and a solute-binding protein (YtrF).

The protein localises to the cell membrane. Functionally, part of the ABC transporter complex YtrBCDEF that plays a role in acetoin utilization during stationary phase and sporulation. The chain is Probable ABC transporter permease YtrD (ytrD) from Bacillus subtilis (strain 168).